Consider the following 254-residue polypeptide: Alcohol dehydrogenase (254 aa).

NAD(+) is bound at residue F10–L33. Residue S138 coordinates substrate. Y151 functions as the Proton acceptor in the catalytic mechanism.

The protein belongs to the short-chain dehydrogenases/reductases (SDR) family. As to quaternary structure, homodimer.

It carries out the reaction a primary alcohol + NAD(+) = an aldehyde + NADH + H(+). The catalysed reaction is a secondary alcohol + NAD(+) = a ketone + NADH + H(+). The chain is Alcohol dehydrogenase (Adh) from Drosophila planitibia (Fruit fly).